A 152-amino-acid chain; its full sequence is UPF0756 membrane protein Moth_1009 (152 aa).

4 helical membrane passes run 5–25, 41–61, 75–95, and 117–137; these read LIIL…VALA, IFPF…IAAI, LGHV…LITT, and LILG…GPFI.

Belongs to the UPF0756 family.

It localises to the cell membrane. The protein is UPF0756 membrane protein Moth_1009 of Moorella thermoacetica (strain ATCC 39073 / JCM 9320).